The chain runs to 567 residues: Formate--tetrahydrofolate ligase (567 aa).

76–83 (TPAGEGKT) is an ATP binding site.

Belongs to the formate--tetrahydrofolate ligase family.

The catalysed reaction is (6S)-5,6,7,8-tetrahydrofolate + formate + ATP = (6R)-10-formyltetrahydrofolate + ADP + phosphate. It functions in the pathway one-carbon metabolism; tetrahydrofolate interconversion. The protein is Formate--tetrahydrofolate ligase of Sinorhizobium medicae (strain WSM419) (Ensifer medicae).